The primary structure comprises 223 residues: UPF0441 protein YgiB (223 aa).

Low complexity predominate over residues threonine 178–threonine 195. A disordered region spans residues threonine 178–glycine 223. The segment covering alanine 204–glycine 223 has biased composition (polar residues).

The protein belongs to the UPF0441 family.

This chain is UPF0441 protein YgiB, found in Salmonella heidelberg (strain SL476).